The following is a 714-amino-acid chain: Polyribonucleotide nucleotidyltransferase (714 aa).

Mg(2+) contacts are provided by Asp-490 and Asp-496. In terms of domain architecture, KH spans 556–615 (PRIETMQIPTDKIREVIGSGGKVIREIVEVSGAKVDINDDGIIKIASPNGDSIKKAYDMI). Residues 625-693 (GQVYTGKVVK…DRGKVRLSMK (69 aa)) enclose the S1 motif domain.

This sequence belongs to the polyribonucleotide nucleotidyltransferase family. Requires Mg(2+) as cofactor.

It localises to the cytoplasm. The catalysed reaction is RNA(n+1) + phosphate = RNA(n) + a ribonucleoside 5'-diphosphate. In terms of biological role, involved in mRNA degradation. Catalyzes the phosphorolysis of single-stranded polyribonucleotides processively in the 3'- to 5'-direction. The protein is Polyribonucleotide nucleotidyltransferase of Ruegeria pomeroyi (strain ATCC 700808 / DSM 15171 / DSS-3) (Silicibacter pomeroyi).